We begin with the raw amino-acid sequence, 76 residues long: Vasotab-TY3 (76 aa).

An N-terminal signal peptide occupies residues 1–21 (MKFALFSVLVLMLIATFVAAD). The Kazal-like domain maps to 22 to 76 (DCPRICTSDYTPVCGTPSGGRRSANRTFANQCGLDSHNCLNKGDTYDKLHDGECK). Intrachain disulfides connect Cys23/Cys60, Cys27/Cys53, and Cys35/Cys75.

Expressed by the salivary gland.

The protein resides in the secreted. Its function is as follows. Vasodilator protein that inhibits vasoconstriction of isolated rat femoral artery induced by phenylephrine. Since platelet aggregation and vasoconstriction are key hemostatic responses, particularly in small wounds, this protein likely participates in the antihemostatic responses during blood feeding. Blocks L-type calcium channels (Cav1/CACNA1) in left ventricular myocytes isolated from rat hearts. The sequence is that of Vasotab-TY3 from Tabanus yao (Horsefly).